A 445-amino-acid polypeptide reads, in one-letter code: Tol-Pal system protein TolB (445 aa).

The first 26 residues, 1–26 (MLNRRNFIRTTSALAASTALPGYAFG), serve as a signal peptide directing secretion.

It belongs to the TolB family. As to quaternary structure, the Tol-Pal system is composed of five core proteins: the inner membrane proteins TolA, TolQ and TolR, the periplasmic protein TolB and the outer membrane protein Pal. They form a network linking the inner and outer membranes and the peptidoglycan layer.

Its subcellular location is the periplasm. Part of the Tol-Pal system, which plays a role in outer membrane invagination during cell division and is important for maintaining outer membrane integrity. This Jannaschia sp. (strain CCS1) protein is Tol-Pal system protein TolB.